Consider the following 147-residue polypeptide: Ribonuclease H (147 aa).

The 143-residue stretch at 3–145 (TEDRVEIYTD…ADQLANKGVE (143 aa)) folds into the RNase H type-1 domain. Mg(2+) contacts are provided by aspartate 12, glutamate 50, aspartate 72, and aspartate 137.

Belongs to the RNase H family. In terms of assembly, monomer. Mg(2+) serves as cofactor.

It localises to the cytoplasm. The catalysed reaction is Endonucleolytic cleavage to 5'-phosphomonoester.. Endonuclease that specifically degrades the RNA of RNA-DNA hybrids. The polypeptide is Ribonuclease H (Chromobacterium violaceum (strain ATCC 12472 / DSM 30191 / JCM 1249 / CCUG 213 / NBRC 12614 / NCIMB 9131 / NCTC 9757 / MK)).